Here is a 120-residue protein sequence, read N- to C-terminus: Myohemerythrin (120 aa).

Residues H26, H56, E60, H75, H79, H108, and D113 each coordinate Fe cation.

The protein belongs to the hemerythrin family.

Functionally, myohemerythrin is an oxygen-binding protein found in the retractor muscles of certain worms. The oxygen-binding site contains two iron atoms. This Sipunculus nudus (Sipunculan worm) protein is Myohemerythrin.